We begin with the raw amino-acid sequence, 323 residues long: Large ribosomal subunit protein uL10 (323 aa).

Positions 298–323 are disordered; the sequence is AAAAPAAAAEPEEEDDDDDFGMGALF. The span at 307 to 317 shows a compositional bias: acidic residues; that stretch reads EPEEEDDDDDF.

It belongs to the universal ribosomal protein uL10 family. In terms of assembly, P0 forms a pentameric complex by interaction with dimers of P1 and P2. Post-translationally, phosphorylated.

Its function is as follows. Ribosomal protein P0 is the functional equivalent of E.coli protein L10. This is Large ribosomal subunit protein uL10 from Trypanosoma cruzi.